Here is a 364-residue protein sequence, read N- to C-terminus: Uroporphyrinogen decarboxylase (364 aa).

Residues Arg-34, Ala-36, Arg-38, Arg-47, Asp-83, Tyr-161, Ser-216, and His-336 each coordinate coproporphyrinogen I. 3 residues coordinate coproporphyrinogen III: Arg-34, Ala-36, and Arg-38. Positions 83, 161, 216, and 336 each coordinate coproporphyrinogen III.

It belongs to the uroporphyrinogen decarboxylase family. As to quaternary structure, homodimer.

It is found in the cytoplasm. Its subcellular location is the cytosol. The enzyme catalyses uroporphyrinogen III + 4 H(+) = coproporphyrinogen III + 4 CO2. It carries out the reaction uroporphyrinogen I + 4 H(+) = coproporphyrinogen I + 4 CO2. It participates in porphyrin-containing compound metabolism; protoporphyrin-IX biosynthesis; coproporphyrinogen-III from 5-aminolevulinate: step 4/4. Its function is as follows. Catalyzes the sequential decarboxylation of the four acetate side chains of uroporphyrinogen to form coproporphyrinogen and participates in the fifth step in the heme biosynthetic pathway. Isomer I or isomer III of uroporphyrinogen may serve as substrate, but only coproporphyrinogen III can ultimately be converted to heme. In vitro also decarboxylates pentacarboxylate porphyrinogen I. The sequence is that of Uroporphyrinogen decarboxylase from Rattus norvegicus (Rat).